Consider the following 493-residue polypeptide: Glutamyl-tRNA(Gln) amidotransferase subunit A (493 aa).

Residues lysine 79 and serine 159 each act as charge relay system in the active site. The active-site Acyl-ester intermediate is the serine 183.

This sequence belongs to the amidase family. GatA subfamily. Heterotrimer of A, B and C subunits.

It catalyses the reaction L-glutamyl-tRNA(Gln) + L-glutamine + ATP + H2O = L-glutaminyl-tRNA(Gln) + L-glutamate + ADP + phosphate + H(+). Allows the formation of correctly charged Gln-tRNA(Gln) through the transamidation of misacylated Glu-tRNA(Gln) in organisms which lack glutaminyl-tRNA synthetase. The reaction takes place in the presence of glutamine and ATP through an activated gamma-phospho-Glu-tRNA(Gln). In Brucella canis (strain ATCC 23365 / NCTC 10854 / RM-666), this protein is Glutamyl-tRNA(Gln) amidotransferase subunit A.